The following is a 533-amino-acid chain: Adenylate kinase 7 (533 aa).

The adenylate kinase stretch occupies residues proline 177–glutamate 426. Position 187-192 (alanine 187–serine 192) interacts with ATP. Residues glutamine 207–leucine 265 form an NMP region. AMP contacts are provided by residues glutamate 242–leucine 265, glycine 292–lysine 295, and glutamine 299. Residues asparagine 347–histidine 357 are LID. Arginine 365 is an AMP binding site. Residue glycine 397 coordinates ATP. Residues arginine 419–serine 487 adopt a coiled-coil conformation. Residues proline 489–glutamine 533 form a DPY-30 region.

This sequence in the central section; belongs to the adenylate kinase family. In the C-terminal section; belongs to the dpy-30 family.

It localises to the cytoplasm. The protein resides in the cytosol. It is found in the cell projection. Its subcellular location is the cilium. The protein localises to the flagellum. It carries out the reaction AMP + ATP = 2 ADP. The catalysed reaction is a 2'-deoxyribonucleoside 5'-diphosphate + ATP = a 2'-deoxyribonucleoside 5'-triphosphate + ADP. It catalyses the reaction a ribonucleoside 5'-diphosphate + ATP = a ribonucleoside 5'-triphosphate + ADP. Functionally, nucleoside monophosphate (NMP) kinase that catalyzes the reversible transfer of the terminal phosphate group between nucleoside triphosphates and monophosphates. Has highest activity toward AMP, and weaker activity toward dAMP, CMP and dCMP. Also displays broad nucleoside diphosphate kinase activity. Involved in maintaining ciliary structure and function. The sequence is that of Adenylate kinase 7 (AK7) from Macaca fascicularis (Crab-eating macaque).